We begin with the raw amino-acid sequence, 273 residues long: Putative pyruvate, phosphate dikinase regulatory protein (273 aa).

Position 153–160 (153–160) interacts with ADP; that stretch reads GVSRTSKT.

Belongs to the pyruvate, phosphate/water dikinase regulatory protein family. PDRP subfamily.

The enzyme catalyses N(tele)-phospho-L-histidyl/L-threonyl-[pyruvate, phosphate dikinase] + ADP = N(tele)-phospho-L-histidyl/O-phospho-L-threonyl-[pyruvate, phosphate dikinase] + AMP + H(+). The catalysed reaction is N(tele)-phospho-L-histidyl/O-phospho-L-threonyl-[pyruvate, phosphate dikinase] + phosphate + H(+) = N(tele)-phospho-L-histidyl/L-threonyl-[pyruvate, phosphate dikinase] + diphosphate. Bifunctional serine/threonine kinase and phosphorylase involved in the regulation of the pyruvate, phosphate dikinase (PPDK) by catalyzing its phosphorylation/dephosphorylation. This Sinorhizobium fredii (strain NBRC 101917 / NGR234) protein is Putative pyruvate, phosphate dikinase regulatory protein.